The sequence spans 198 residues: Beta-crystallin A1-2 (198 aa).

The segment at 1–13 is N-terminal arm; it reads MAQINPLPVPLGP. Beta/gamma crystallin 'Greek key' domains are found at residues 14 to 53 and 54 to 100; these read WKITVYDQENFQGKRMEFTSSCANIMECGFDNIRSLKVEC and GAWI…RPIC. Residues 101 to 106 are connecting peptide; sequence SANHIE. 2 Beta/gamma crystallin 'Greek key' domains span residues 107–148 and 149–197; these read SKLV…KVQC and GAWV…RRIQ.

The protein belongs to the beta/gamma-crystallin family. Homo/heterodimer, or complexes of higher-order. The structure of beta-crystallin oligomers seems to be stabilized through interactions between the N-terminal arms. Post-translationally, the N-terminus is blocked.

In terms of biological role, crystallins are the dominant structural components of the vertebrate eye lens. This Aquarana catesbeiana (American bullfrog) protein is Beta-crystallin A1-2.